Reading from the N-terminus, the 232-residue chain is Beta-casein (232 aa).

The N-terminal stretch at 1 to 15 is a signal peptide; sequence MKVLILACRVALALA. 4 positions are modified to phosphoserine: Ser30, Ser32, Ser33, and Ser34.

Belongs to the beta-casein family. Mammary gland specific. Secreted in milk.

It is found in the secreted. In terms of biological role, important role in determination of the surface properties of the casein micelles. The chain is Beta-casein (CSN2) from Camelus dromedarius (Dromedary).